A 114-amino-acid chain; its full sequence is Probable 4-amino-4-deoxy-L-arabinose-phosphoundecaprenol flippase subunit ArnE (114 aa).

A run of 3 helical transmembrane segments spans residues 41–61 (PWLI…IYLL), 64–84 (LPLS…LIGS), and 94–114 (YHNW…GGLL). In terms of domain architecture, EamA spans 53–112 (GMLLWIYLLQRLPLSMAYPMLSINLVLVLIGSRLFFHEQISYHNWLGAGAIIIGALLLGG).

The protein belongs to the ArnE family. In terms of assembly, heterodimer of ArnE and ArnF.

The protein localises to the cell inner membrane. It participates in bacterial outer membrane biogenesis; lipopolysaccharide biosynthesis. Its function is as follows. Translocates 4-amino-4-deoxy-L-arabinose-phosphoundecaprenol (alpha-L-Ara4N-phosphoundecaprenol) from the cytoplasmic to the periplasmic side of the inner membrane. The polypeptide is Probable 4-amino-4-deoxy-L-arabinose-phosphoundecaprenol flippase subunit ArnE (Aeromonas salmonicida (strain A449)).